The chain runs to 258 residues: Imidazole glycerol phosphate synthase subunit HisF (258 aa).

Residues D12 and D131 contribute to the active site.

Belongs to the HisA/HisF family. In terms of assembly, heterodimer of HisH and HisF.

The protein localises to the cytoplasm. It catalyses the reaction 5-[(5-phospho-1-deoxy-D-ribulos-1-ylimino)methylamino]-1-(5-phospho-beta-D-ribosyl)imidazole-4-carboxamide + L-glutamine = D-erythro-1-(imidazol-4-yl)glycerol 3-phosphate + 5-amino-1-(5-phospho-beta-D-ribosyl)imidazole-4-carboxamide + L-glutamate + H(+). Its pathway is amino-acid biosynthesis; L-histidine biosynthesis; L-histidine from 5-phospho-alpha-D-ribose 1-diphosphate: step 5/9. Functionally, IGPS catalyzes the conversion of PRFAR and glutamine to IGP, AICAR and glutamate. The HisF subunit catalyzes the cyclization activity that produces IGP and AICAR from PRFAR using the ammonia provided by the HisH subunit. The protein is Imidazole glycerol phosphate synthase subunit HisF of Paenarthrobacter aurescens (strain TC1).